Reading from the N-terminus, the 901-residue chain is MLIKLLTKVFGSRNDRTLRRMRKAVSLINAMEPEMEKLSDDELKAKTNEFRARIEKGESVESLIPEAFAVVREASKRVFGMRHFDVQLLGGMVLNDRCIAEMRTGEGKTLTATLPAYLNALSGKGVHVVTVNDYLAQRDAENNRPLFEFLGMSVGINLPGMPAPAKREAYAADITYGTNNEYGFDYLRDNMAFSPEERVQRKLHYALVDEVDSILIDEARTPLIISGPAEDSSEMYKKVNKIIPHLIRQEKEDSDTFQGEGHFSVDEKARQVNLTERGLVLIEELLVQEGIMDEGESLYSPGNIMLMHHVTAALRAHALFTRDVDYIVKDGEVIIVDEHTGRTMQGRRWSDGLHQAVEAKEGVEIQNENQTLASITFQNYFRLYEKLAGMTGTADTEAFEFSSIYKLDTVVVPTNRPMIRKDLPDLVYMTEAEKIQAIIEDIKERTANGQPVLVGTISIEKSEVVSRELTKAGIKHNVLNAKFHANEAGIVAQAGYPAAVTIATNMAGRGTDIMLGGSWQAEVAALEAPTEEQIAQIKADWQVRHDAVLAAGGLHIIGTERHESRRIDNQLRGRSGRQGDPGSSRFYLSMEDALMRIFASDRVSGMMRKLGMKPGEAIEHPWVTKAIANAQRKVESRNFDIRKQLLEYDDVANDQRRAIYTQRNELLDVSDVSDTINSIREDVFKATIDAYIPPQSLEEMWDILGLQERLKNDFDLEMPIAEWLDKEPELHEETLRERILAQSIEVYQRKEEVVGAEMMRHFEKGVMLQTLDSLWKEHLAAMDYLRQGIHLRGYAQKDPKQEYKRESFAMFAAMLESLKYEVISTLSKVQVRMPEEVEAMEMQRREEAERLAQMQQLSHQDDDAAVAADLAAQTGERKIGRNDPCPCGSGKKYKQCHGRLS.

ATP-binding positions include glutamine 87, 105 to 109, and aspartate 512; that span reads GEGKT. Zn(2+)-binding residues include cysteine 885, cysteine 887, cysteine 896, and histidine 897.

The protein belongs to the SecA family. As to quaternary structure, monomer and homodimer. Part of the essential Sec protein translocation apparatus which comprises SecA, SecYEG and auxiliary proteins SecDF-YajC and YidC. The cofactor is Zn(2+).

Its subcellular location is the cell inner membrane. It localises to the cytoplasm. The catalysed reaction is ATP + H2O + cellular proteinSide 1 = ADP + phosphate + cellular proteinSide 2.. Its function is as follows. Part of the Sec protein translocase complex. Interacts with the SecYEG preprotein conducting channel. Has a central role in coupling the hydrolysis of ATP to the transfer of proteins into and across the cell membrane, serving both as a receptor for the preprotein-SecB complex and as an ATP-driven molecular motor driving the stepwise translocation of polypeptide chains across the membrane. The polypeptide is Protein translocase subunit SecA (Salmonella paratyphi A (strain ATCC 9150 / SARB42)).